Reading from the N-terminus, the 94-residue chain is ATP synthase F(0) complex subunit f, mitochondrial (94 aa).

At Ala2 the chain carries N-acetylalanine. Ser3 is subject to Phosphoserine. N6-acetyllysine is present on Lys22. The chain crosses the membrane as a helical span at residues 68–85; it reads MVLACYVLFSYSFSYKHL.

It belongs to the ATPase F chain family. Component of the ATP synthase complex composed at least of ATP5F1A/subunit alpha, ATP5F1B/subunit beta, ATP5MC1/subunit c (homooctomer), MT-ATP6/subunit a, MT-ATP8/subunit 8, ATP5ME/subunit e, ATP5MF/subunit f, ATP5MG/subunit g, ATP5MK/subunit k, ATP5MJ/subunit j, ATP5F1C/subunit gamma, ATP5F1D/subunit delta, ATP5F1E/subunit epsilon, ATP5PF/subunit F6, ATP5PB/subunit b, ATP5PD/subunit d, ATP5PO/subunit OSCP. ATP synthase complex consists of a soluble F(1) head domain (subunits alpha(3) and beta(3)) - the catalytic core - and a membrane F(0) domain - the membrane proton channel (subunits c, a, 8, e, f, g, k and j). These two domains are linked by a central stalk (subunits gamma, delta, and epsilon) rotating inside the F1 region and a stationary peripheral stalk (subunits F6, b, d, and OSCP).

It localises to the mitochondrion. It is found in the mitochondrion inner membrane. In terms of biological role, subunit f, of the mitochondrial membrane ATP synthase complex (F(1)F(0) ATP synthase or Complex V) that produces ATP from ADP in the presence of a proton gradient across the membrane which is generated by electron transport complexes of the respiratory chain. ATP synthase complex consist of a soluble F(1) head domain - the catalytic core - and a membrane F(1) domain - the membrane proton channel. These two domains are linked by a central stalk rotating inside the F(1) region and a stationary peripheral stalk. During catalysis, ATP synthesis in the catalytic domain of F(1) is coupled via a rotary mechanism of the central stalk subunits to proton translocation. In vivo, can only synthesize ATP although its ATP hydrolase activity can be activated artificially in vitro. Part of the complex F(0) domain. In Pongo abelii (Sumatran orangutan), this protein is ATP synthase F(0) complex subunit f, mitochondrial.